Consider the following 193-residue polypeptide: Peptidyl-tRNA hydrolase (193 aa).

Y16 is a binding site for tRNA. Catalysis depends on H21, which acts as the Proton acceptor. Residues Y66, N68, and N114 each coordinate tRNA.

Belongs to the PTH family. Monomer.

The protein localises to the cytoplasm. It catalyses the reaction an N-acyl-L-alpha-aminoacyl-tRNA + H2O = an N-acyl-L-amino acid + a tRNA + H(+). Hydrolyzes ribosome-free peptidyl-tRNAs (with 1 or more amino acids incorporated), which drop off the ribosome during protein synthesis, or as a result of ribosome stalling. In terms of biological role, catalyzes the release of premature peptidyl moieties from peptidyl-tRNA molecules trapped in stalled 50S ribosomal subunits, and thus maintains levels of free tRNAs and 50S ribosomes. The sequence is that of Peptidyl-tRNA hydrolase from Geobacter sulfurreducens (strain ATCC 51573 / DSM 12127 / PCA).